Reading from the N-terminus, the 215-residue chain is Glutathione S-transferase D6 (215 aa).

Residues 1–80 form the GST N-terminal domain; it reads MDLYNMSGSP…YLVEQYGKDD (80 aa). Glutathione-binding positions include S9, 50–52, and 64–66; these read HTI and ETR. In terms of domain architecture, GST C-terminal spans 86–206; sequence DPQKQALINQ…LARIQSAKKF (121 aa).

It belongs to the GST superfamily. Delta family. Homodimer.

The catalysed reaction is RX + glutathione = an S-substituted glutathione + a halide anion + H(+). Conjugation of reduced glutathione to a wide number of exogenous and endogenous hydrophobic electrophiles. May be involved in detoxification. The polypeptide is Glutathione S-transferase D6 (Drosophila melanogaster (Fruit fly)).